The primary structure comprises 588 residues: Aspartate--tRNA ligase (588 aa).

Glu-177 serves as a coordination point for L-aspartate. The interval 201–204 (QLFK) is aspartate. Residue Arg-223 participates in L-aspartate binding. ATP-binding positions include 223–225 (RDE) and Gln-232. Residue His-451 participates in L-aspartate binding. Position 485 (Glu-485) interacts with ATP. Arg-492 provides a ligand contact to L-aspartate. Residue 537–540 (GLDR) participates in ATP binding.

It belongs to the class-II aminoacyl-tRNA synthetase family. Type 1 subfamily. Homodimer.

It localises to the cytoplasm. It catalyses the reaction tRNA(Asp) + L-aspartate + ATP = L-aspartyl-tRNA(Asp) + AMP + diphosphate. Functionally, catalyzes the attachment of L-aspartate to tRNA(Asp) in a two-step reaction: L-aspartate is first activated by ATP to form Asp-AMP and then transferred to the acceptor end of tRNA(Asp). This is Aspartate--tRNA ligase from Staphylococcus aureus (strain Newman).